The following is a 280-amino-acid chain: ESX-1 secretion-associated protein EspJ (280 aa).

S70 carries the post-translational modification Phosphoserine. Low complexity-rich tracts occupy residues 167-181 (QTISQTAQQAAQSAQ) and 246-280 (PAQAMDTGAGARPAASPLAAPVDPSTPAPSTTTTL). The disordered stretch occupies residues 167–280 (QTISQTAQQA…TPAPSTTTTL (114 aa)).

In terms of processing, phosphorylated at Ser-70.

It is found in the secreted. In terms of biological role, could be involved in regulation of growth and intracellular survival. This Mycobacterium tuberculosis (strain CDC 1551 / Oshkosh) protein is ESX-1 secretion-associated protein EspJ.